The primary structure comprises 175 residues: Adenine phosphoribosyltransferase (175 aa).

It belongs to the purine/pyrimidine phosphoribosyltransferase family. In terms of assembly, homodimer.

It localises to the cytoplasm. It catalyses the reaction AMP + diphosphate = 5-phospho-alpha-D-ribose 1-diphosphate + adenine. It participates in purine metabolism; AMP biosynthesis via salvage pathway; AMP from adenine: step 1/1. In terms of biological role, catalyzes a salvage reaction resulting in the formation of AMP, that is energically less costly than de novo synthesis. This chain is Adenine phosphoribosyltransferase, found in Caldicellulosiruptor saccharolyticus (strain ATCC 43494 / DSM 8903 / Tp8T 6331).